The primary structure comprises 322 residues: MMESGEALLKKLDGRLSGLRGRLTPDTGMDKITWFRAGGPAQVLFQPSDEEDLSAFLKAVPEEIPLLVVGIGSNLLVRDGGVPGFVVRLSAKGFGEVEQVCDTQLRAGAAAPDKRVAAAALEAGLAGFHFYHGIPGGIGGALRMNAGANGVETRERVVEVRALDRKGEVHVLSNADMGYAYRHSSASPDLIFTSVLFEGVPGERDDIRRAMDEVQHHRETVQPVREKTGGSTFKNSEGTSAWKEIDKAGCRGLRVGGAQMSEMHCNFMINTGNATGHDLETLGETVRARVFENSGIRLHWEIKRLGLFREGEQIEEFLGKIV.

The FAD-binding PCMH-type domain maps to arginine 36–glycine 202. The active site involves arginine 182. The active-site Proton donor is serine 231. Residue glutamate 301 is part of the active site.

This sequence belongs to the MurB family. Requires FAD as cofactor.

The protein localises to the cytoplasm. The catalysed reaction is UDP-N-acetyl-alpha-D-muramate + NADP(+) = UDP-N-acetyl-3-O-(1-carboxyvinyl)-alpha-D-glucosamine + NADPH + H(+). It participates in cell wall biogenesis; peptidoglycan biosynthesis. Functionally, cell wall formation. This is UDP-N-acetylenolpyruvoylglucosamine reductase from Brucella abortus (strain S19).